Here is a 60-residue protein sequence, read N- to C-terminus: Single-pass membrane and coiled-coil domain-containing protein 4 homolog (60 aa).

The tract at residues 1 to 23 (MRKLRGGQTKETRKQRQERKEEN) is disordered. The segment covering 8 to 23 (QTKETRKQRQERKEEN) has biased composition (basic and acidic residues). The stretch at 8–33 (QTKETRKQRQERKEENLKIQQQMKTI) forms a coiled coil. The chain crosses the membrane as a helical span at residues 31–51 (KTIVLPTIGVIFLCIVVYVFL).

The protein belongs to the SMCO4 family.

The protein resides in the membrane. This chain is Single-pass membrane and coiled-coil domain-containing protein 4 homolog, found in Anopheles gambiae (African malaria mosquito).